The primary structure comprises 291 residues: MLAATDLARILDGRRIADDLLDALKTRVDARVAAGKLPPTLAVVLVGSDPASVVYVRNKRRAAEKVGIKAYDFDLPEATTEAELAALIDRLNADPKIHGVLIQLPLPGIPDAHRLIQRIDPRKDVDGFHPQNVGHLALREFGLRPCTPRGIVTLLGHTDRPVRGRNATIVGVSNHVGRPMGLELLMAGCTVTSCHKFTPPQMLEAAVRQADILIVAVGRPGVIPGEWVKPGAVVIDVGINRLDDGQLVGDVGFESAVKRASWITPVPGGVGPMTVATLMQNTLEAAEATDC.

NADP(+) contacts are provided by residues 171 to 173 (GVS) and Ile-239.

It belongs to the tetrahydrofolate dehydrogenase/cyclohydrolase family. In terms of assembly, homodimer.

It catalyses the reaction (6R)-5,10-methylene-5,6,7,8-tetrahydrofolate + NADP(+) = (6R)-5,10-methenyltetrahydrofolate + NADPH. The catalysed reaction is (6R)-5,10-methenyltetrahydrofolate + H2O = (6R)-10-formyltetrahydrofolate + H(+). It functions in the pathway one-carbon metabolism; tetrahydrofolate interconversion. Catalyzes the oxidation of 5,10-methylenetetrahydrofolate to 5,10-methenyltetrahydrofolate and then the hydrolysis of 5,10-methenyltetrahydrofolate to 10-formyltetrahydrofolate. The protein is Bifunctional protein FolD of Xylella fastidiosa (strain Temecula1 / ATCC 700964).